Here is a 393-residue protein sequence, read N- to C-terminus: Putative B3 domain-containing protein Os06g0632500 (393 aa).

3 DNA-binding regions (TF-B3) span residues 27–123 (LSVP…FDPG), 141–238 (RPRF…FLQN), and 316–393 (NSFT…VQRR).

The protein resides in the nucleus. The sequence is that of Putative B3 domain-containing protein Os06g0632500 from Oryza sativa subsp. japonica (Rice).